Consider the following 570-residue polypeptide: Probable diguanylate cyclase DgcQ (570 aa).

2 helical membrane passes run 20-40 (FGPGHVVNTCFLIVMLFSTLL) and 360-380 (IALTLLWVLFTAMLLISWGVI). The GGDEF domain maps to 428–563 (QPFSVIQLDL…GRNRICASDA (136 aa)). D436 is a binding site for Mg(2+). Substrate is bound by residues N444, H449, and D453. E479 lines the Mg(2+) pocket. E479 functions as the Proton acceptor in the catalytic mechanism.

As to quaternary structure, homodimer. Requires Mg(2+) as cofactor.

It localises to the cell inner membrane. It catalyses the reaction 2 GTP = 3',3'-c-di-GMP + 2 diphosphate. Its pathway is glycan metabolism; bacterial cellulose biosynthesis. It functions in the pathway purine metabolism; 3',5'-cyclic di-GMP biosynthesis. In terms of biological role, catalyzes the synthesis of cyclic-di-GMP (c-di-GMP) via the condensation of 2 GTP molecules. Cyclic-di-GMP is a second messenger which controls cell surface-associated traits in bacteria. Involved in the regulation of cellulose production. This is Probable diguanylate cyclase DgcQ from Salmonella choleraesuis (strain SC-B67).